The primary structure comprises 337 residues: Aspartate carbamoyltransferase catalytic subunit (337 aa).

Residues arginine 54 and threonine 55 each coordinate carbamoyl phosphate. Lysine 82 provides a ligand contact to L-aspartate. The carbamoyl phosphate site is built by arginine 104, histidine 134, and glutamine 137. The L-aspartate site is built by arginine 177 and arginine 232. Residues glycine 277 and proline 278 each coordinate carbamoyl phosphate.

It belongs to the aspartate/ornithine carbamoyltransferase superfamily. ATCase family. In terms of assembly, heterododecamer (2C3:3R2) of six catalytic PyrB chains organized as two trimers (C3), and six regulatory PyrI chains organized as three dimers (R2).

The catalysed reaction is carbamoyl phosphate + L-aspartate = N-carbamoyl-L-aspartate + phosphate + H(+). Its pathway is pyrimidine metabolism; UMP biosynthesis via de novo pathway; (S)-dihydroorotate from bicarbonate: step 2/3. Functionally, catalyzes the condensation of carbamoyl phosphate and aspartate to form carbamoyl aspartate and inorganic phosphate, the committed step in the de novo pyrimidine nucleotide biosynthesis pathway. In Arthrobacter sp. (strain FB24), this protein is Aspartate carbamoyltransferase catalytic subunit.